The chain runs to 141 residues: MFANVGWGEMLVLVIAGLVILGPERLPGAIRWTAGAVRQARDYITGATSQLREDLGPEFDDLREPLSELQKLRGMTPRAALTKHLLDGDDSIFTGRFDSTSSDQPGSGKPPKPQSGPGPAAASGPAATTTPASTPFDPDAT.

Residues 2–22 form a helical membrane-spanning segment; the sequence is FANVGWGEMLVLVIAGLVILG. Positions 92–141 are disordered; that stretch reads IFTGRFDSTSSDQPGSGKPPKPQSGPGPAAASGPAATTTPASTPFDPDAT. The segment covering 117–141 has biased composition (low complexity); that stretch reads PGPAAASGPAATTTPASTPFDPDAT.

The protein belongs to the TatB family. In terms of assembly, the Tat system comprises two distinct complexes: a TatABC complex, containing multiple copies of TatA, TatB and TatC subunits, and a separate TatA complex, containing only TatA subunits. Substrates initially bind to the TatABC complex, which probably triggers association of the separate TatA complex to form the active translocon.

It is found in the cell membrane. Part of the twin-arginine translocation (Tat) system that transports large folded proteins containing a characteristic twin-arginine motif in their signal peptide across membranes. Together with TatC, TatB is part of a receptor directly interacting with Tat signal peptides. TatB may form an oligomeric binding site that transiently accommodates folded Tat precursor proteins before their translocation. The protein is Sec-independent protein translocase protein TatB of Mycolicibacterium gilvum (strain PYR-GCK) (Mycobacterium gilvum (strain PYR-GCK)).